The primary structure comprises 269 residues: Imidazoleglycerol-phosphate dehydratase 3, chloroplastic (269 aa).

Residues 1-51 (MTTAPVVSPSLSRLHSAPASPFPKAPVGSGAGVAFPARPYGPSLRLRSAVM) constitute a chloroplast transit peptide. Substrate contacts are provided by residues glutamate 83, 109–117 (HMLDQLASH), 135–139 (HHSNE), arginine 161, and arginine 183. Residues histidine 109, histidine 135, histidine 136, and glutamate 139 each contribute to the Mn(2+) site. Residues histidine 207, histidine 231, histidine 232, and glutamate 235 each coordinate Mn(2+). Residues 231 to 239 (HHIIEATFK) and 261 to 263 (SSK) contribute to the substrate site.

It belongs to the imidazoleglycerol-phosphate dehydratase family. The cofactor is Mn(2+).

It is found in the plastid. Its subcellular location is the chloroplast. It catalyses the reaction D-erythro-1-(imidazol-4-yl)glycerol 3-phosphate = 3-(imidazol-4-yl)-2-oxopropyl phosphate + H2O. It functions in the pathway amino-acid biosynthesis; L-histidine biosynthesis; L-histidine from 5-phospho-alpha-D-ribose 1-diphosphate: step 6/9. The polypeptide is Imidazoleglycerol-phosphate dehydratase 3, chloroplastic (Triticum aestivum (Wheat)).